The chain runs to 249 residues: Aquaporin (249 aa).

The Cytoplasmic portion of the chain corresponds to 1 to 11; the sequence is MTRKWIKKLQS. A helical transmembrane segment spans residues 12-32; the sequence is YIGEFFASFIFGFAVYTSIIG. Over 33 to 39 the chain is Extracellular; sequence SAQTGQS. A helical membrane pass occupies residues 40 to 60; sequence AGPIIVALTIALSGVAIIYSF. At 61-83 the chain is on the cytoplasmic side; that stretch reads CDITVAHFNPAITFSAMCFRRLP. Positions 69 to 71 match the NPA motif; it reads NPA. A helical transmembrane segment spans residues 84 to 104; that stretch reads FFGGIFIIIFQVAGFIIAGLA. Topologically, residues 105-133 are extracellular; that stretch reads SVAVLPGKYKNKLEIARPKRVADNVSRGR. The chain crosses the membrane as a helical span at residues 134–154; sequence IFGTEFFLTAILVYVAFAVGV. The Cytoplasmic segment spans residues 155 to 179; it reads NPYTPPKDEHGDQLDPDEGLTEGRK. A helical membrane pass occupies residues 180–200; it reads ITAPLAIGFTLGFCALLGIAS. Residues 201 to 223 lie on the Extracellular side of the membrane; that stretch reads SGGAFNPGIVLSPMILTGTWDFW. The NPG signature appears at 206 to 208; the sequence is NPG. The helical transmembrane segment at 224–246 threads the bilayer; sequence WVYLLGQFSGGLLGGGLQRFLLY. The Cytoplasmic portion of the chain corresponds to 247–249; it reads KIF.

It belongs to the MIP/aquaporin (TC 1.A.8) family.

The protein resides in the cell membrane. Its function is as follows. Water channel required to facilitate the transport of water across membranes. Involved in osmotolerance. The chain is Aquaporin (AQP) from Vairimorpha ceranae (strain BRL01) (Microsporidian parasite).